The primary structure comprises 240 residues: Large ribosomal subunit protein uL2 (240 aa).

Polar residues predominate over residues 1–20 (MGKRLQSQNRGKGTPRYTSP). Disordered regions lie at residues 1–33 (MGKR…YRKF) and 204–240 (PFGG…TGKR). Composition is skewed to basic residues over residues 21 to 30 (THKRKGAVKY) and 224 to 240 (SPGR…TGKR).

This sequence belongs to the universal ribosomal protein uL2 family. In terms of assembly, part of the 50S ribosomal subunit. Forms a bridge to the 30S subunit in the 70S ribosome.

One of the primary rRNA binding proteins. Required for association of the 30S and 50S subunits to form the 70S ribosome, for tRNA binding and peptide bond formation. It has been suggested to have peptidyltransferase activity; this is somewhat controversial. Makes several contacts with the 16S rRNA in the 70S ribosome. The polypeptide is Large ribosomal subunit protein uL2 (Methanococcus aeolicus (strain ATCC BAA-1280 / DSM 17508 / OCM 812 / Nankai-3)).